The primary structure comprises 314 residues: 4-hydroxy-3-methylbut-2-enyl diphosphate reductase (314 aa).

[4Fe-4S] cluster is bound at residue cysteine 18. Positions 47 and 80 each coordinate (2E)-4-hydroxy-3-methylbut-2-enyl diphosphate. Positions 47 and 80 each coordinate dimethylallyl diphosphate. Histidine 47 and histidine 80 together coordinate isopentenyl diphosphate. A [4Fe-4S] cluster-binding site is contributed by cysteine 102. Histidine 130 lines the (2E)-4-hydroxy-3-methylbut-2-enyl diphosphate pocket. Histidine 130 is a binding site for dimethylallyl diphosphate. Histidine 130 serves as a coordination point for isopentenyl diphosphate. Glutamate 132 acts as the Proton donor in catalysis. Residue threonine 171 coordinates (2E)-4-hydroxy-3-methylbut-2-enyl diphosphate. Cysteine 201 contacts [4Fe-4S] cluster. (2E)-4-hydroxy-3-methylbut-2-enyl diphosphate-binding residues include serine 229, serine 230, asparagine 231, and serine 273. Positions 229, 230, 231, and 273 each coordinate dimethylallyl diphosphate. Isopentenyl diphosphate-binding residues include serine 229, serine 230, asparagine 231, and serine 273.

Belongs to the IspH family. [4Fe-4S] cluster is required as a cofactor.

It catalyses the reaction isopentenyl diphosphate + 2 oxidized [2Fe-2S]-[ferredoxin] + H2O = (2E)-4-hydroxy-3-methylbut-2-enyl diphosphate + 2 reduced [2Fe-2S]-[ferredoxin] + 2 H(+). The catalysed reaction is dimethylallyl diphosphate + 2 oxidized [2Fe-2S]-[ferredoxin] + H2O = (2E)-4-hydroxy-3-methylbut-2-enyl diphosphate + 2 reduced [2Fe-2S]-[ferredoxin] + 2 H(+). The protein operates within isoprenoid biosynthesis; dimethylallyl diphosphate biosynthesis; dimethylallyl diphosphate from (2E)-4-hydroxy-3-methylbutenyl diphosphate: step 1/1. It participates in isoprenoid biosynthesis; isopentenyl diphosphate biosynthesis via DXP pathway; isopentenyl diphosphate from 1-deoxy-D-xylulose 5-phosphate: step 6/6. Functionally, catalyzes the conversion of 1-hydroxy-2-methyl-2-(E)-butenyl 4-diphosphate (HMBPP) into a mixture of isopentenyl diphosphate (IPP) and dimethylallyl diphosphate (DMAPP). Acts in the terminal step of the DOXP/MEP pathway for isoprenoid precursor biosynthesis. This is 4-hydroxy-3-methylbut-2-enyl diphosphate reductase from Phenylobacterium zucineum (strain HLK1).